The following is a 389-amino-acid chain: Capreomycidine synthase (389 aa).

An N6-(pyridoxal phosphate)lysine modification is found at Lys230.

It belongs to the class-II pyridoxal-phosphate-dependent aminotransferase family. Requires pyridoxal 5'-phosphate as cofactor.

It carries out the reaction (2S,3S)-hydroxyarginine = (2S,3R)-capreomycidine + H2O. It functions in the pathway antibiotic biosynthesis. In terms of biological role, involved in the biosynthesis of capreomycidine, an unusual amino acid used by non-ribosomal peptide synthases (NRPS) to make the tuberactinomycin class of peptide antibiotic such as viomycin and capreomycin. Catalyzes the dehydration of the C3 hydroxyl of (3S)-hydroxy-(2S)-arginine and the intramolecular cyclization to yield (2S,3R)-capreomycidine. The protein is Capreomycidine synthase of Streptomyces vinaceus.